Reading from the N-terminus, the 81-residue chain is Putative membrane protein insertion efficiency factor (81 aa).

The protein belongs to the UPF0161 family.

Its subcellular location is the cell inner membrane. In terms of biological role, could be involved in insertion of integral membrane proteins into the membrane. The protein is Putative membrane protein insertion efficiency factor of Pseudomonas savastanoi pv. phaseolicola (strain 1448A / Race 6) (Pseudomonas syringae pv. phaseolicola (strain 1448A / Race 6)).